A 476-amino-acid chain; its full sequence is uncharacterized protein (476 aa).

A LisH domain is found at 7-39; sequence SRFYTNLLIANYLKHNGLEDTLAAFIRETALPL.

This is an uncharacterized protein from Saccharomyces cerevisiae (strain ATCC 204508 / S288c) (Baker's yeast).